The following is a 581-amino-acid chain: Putative aluminum-activated malate transporter 3 (581 aa).

A run of 6 helical transmembrane segments spans residues 98 to 118 (MGLALTLTSILIFFKIPGLEL), 122 to 142 (YLWAILTVVVIFEFSIGATFS), 148 to 164 (GLGTLSAGGLALGMSWI), 167 to 187 (MTGNWADVFNAASIFVVAFFA), 201 to 218 (YGFRVFLLTYCYVIVSGY), and 231 to 251 (FLLIALGASVGLIVNTCIYPI).

It belongs to the aromatic acid exporter (TC 2.A.85) family.

Its subcellular location is the membrane. Malate transporter. This Arabidopsis thaliana (Mouse-ear cress) protein is Putative aluminum-activated malate transporter 3 (ALMT3).